A 66-amino-acid chain; its full sequence is Small ribosomal subunit protein bS21 (66 aa).

Belongs to the bacterial ribosomal protein bS21 family.

This chain is Small ribosomal subunit protein bS21, found in Rickettsia typhi (strain ATCC VR-144 / Wilmington).